The following is a 127-amino-acid chain: RutC family protein PYRAB12510 (127 aa).

The protein belongs to the RutC family.

The protein is RutC family protein PYRAB12510 of Pyrococcus abyssi (strain GE5 / Orsay).